The chain runs to 236 residues: 2,3,4,5-tetrahydropyridine-2,6-dicarboxylate N-acetyltransferase (236 aa).

It belongs to the transferase hexapeptide repeat family. DapH subfamily.

The catalysed reaction is (S)-2,3,4,5-tetrahydrodipicolinate + acetyl-CoA + H2O = L-2-acetamido-6-oxoheptanedioate + CoA. Its pathway is amino-acid biosynthesis; L-lysine biosynthesis via DAP pathway; LL-2,6-diaminopimelate from (S)-tetrahydrodipicolinate (acetylase route): step 1/3. In terms of biological role, catalyzes the transfer of an acetyl group from acetyl-CoA to tetrahydrodipicolinate. This Bacillus velezensis (strain DSM 23117 / BGSC 10A6 / LMG 26770 / FZB42) (Bacillus amyloliquefaciens subsp. plantarum) protein is 2,3,4,5-tetrahydropyridine-2,6-dicarboxylate N-acetyltransferase.